We begin with the raw amino-acid sequence, 773 residues long: Serine/threonine-protein kinase CBK1 (773 aa).

2 stretches are compositionally biased toward polar residues: residues 50 to 59 (LHDQYSSHME) and 178 to 217 (GNYN…SPQR). 2 disordered regions span residues 50 to 111 (LHDQ…GGNI) and 177 to 275 (NGNY…QQQQ). Low complexity-rich tracts occupy residues 218–256 (QPAQ…QQQP) and 265–275 (QQTQLQQQQQQ). A Protein kinase domain is found at 370–686 (FHTVQVIGKG…ADEIKSHPFF (317 aa)). Residues 376 to 384 (IGKGAFGEV) and K399 contribute to the ATP site. The active-site Proton acceptor is the D493. The AGC-kinase C-terminal domain maps to 687–771 (RGVDWNTIRQ…SRFDYLTRKN (85 aa)).

This sequence belongs to the protein kinase superfamily. STE Ser/Thr protein kinase family. COT1 subfamily.

The catalysed reaction is L-seryl-[protein] + ATP = O-phospho-L-seryl-[protein] + ADP + H(+). It carries out the reaction L-threonyl-[protein] + ATP = O-phospho-L-threonyl-[protein] + ADP + H(+). In terms of biological role, protein kinase that seems to play a role in the regulation of cell morphogenesis and proliferation. In Candida glabrata (strain ATCC 2001 / BCRC 20586 / JCM 3761 / NBRC 0622 / NRRL Y-65 / CBS 138) (Yeast), this protein is Serine/threonine-protein kinase CBK1 (CBK1).